A 542-amino-acid polypeptide reads, in one-letter code: uncharacterized protein (542 aa).

A disordered region spans residues 256–275 (KKSTTTSSPPITTTHLSKPE). A compositionally biased stretch (low complexity) spans 258 to 269 (STTTSSPPITTT).

This is an uncharacterized protein from Caenorhabditis elegans.